Reading from the N-terminus, the 236-residue chain is UPF0257 lipoprotein YnfC (236 aa).

An N-terminal signal peptide occupies residues 1 to 16 (MKKPLLLTLLCMILAG). Cys-17 carries the N-palmitoyl cysteine lipid modification. A lipid anchor (S-diacylglycerol cysteine) is attached at Cys-17.

This sequence belongs to the UPF0257 family.

It is found in the cell membrane. In Salmonella schwarzengrund (strain CVM19633), this protein is UPF0257 lipoprotein YnfC.